The primary structure comprises 171 residues: Peptide deformylase (171 aa).

2 residues coordinate Fe cation: Cys-92 and His-134. The active site involves Glu-135. His-138 is a binding site for Fe cation.

Belongs to the polypeptide deformylase family. Fe(2+) serves as cofactor.

It catalyses the reaction N-terminal N-formyl-L-methionyl-[peptide] + H2O = N-terminal L-methionyl-[peptide] + formate. Its function is as follows. Removes the formyl group from the N-terminal Met of newly synthesized proteins. Requires at least a dipeptide for an efficient rate of reaction. N-terminal L-methionine is a prerequisite for activity but the enzyme has broad specificity at other positions. This is Peptide deformylase from Polynucleobacter necessarius subsp. necessarius (strain STIR1).